A 366-amino-acid chain; its full sequence is Pyrimidine monooxygenase RutA (366 aa).

FMN is bound by residues Ile49–Lys50, Asn115, Glu124, Arg140–Tyr141, and Ser190.

It belongs to the NtaA/SnaA/DszA monooxygenase family. RutA subfamily.

It carries out the reaction uracil + FMNH2 + NADH + O2 = (Z)-3-ureidoacrylate + FMN + NAD(+) + H2O + H(+). It catalyses the reaction thymine + FMNH2 + NADH + O2 = (Z)-2-methylureidoacrylate + FMN + NAD(+) + H2O + H(+). In terms of biological role, catalyzes the pyrimidine ring opening between N-3 and C-4 by an unusual flavin hydroperoxide-catalyzed mechanism, adding oxygen atoms in the process to yield ureidoacrylate peracid, that immediately reacts with FMN forming ureidoacrylate and FMN-N(5)-oxide. The FMN-N(5)-oxide reacts spontaneously with NADH to produce FMN. Requires the flavin reductase RutF to regenerate FMN in vivo. The chain is Pyrimidine monooxygenase RutA from Serratia proteamaculans (strain 568).